Here is a 180-residue protein sequence, read N- to C-terminus: Ribulose bisphosphate carboxylase small subunit, chloroplastic 3 (180 aa).

Residues Met1 to Ser56 constitute a chloroplast transit peptide.

Belongs to the RuBisCO small chain family. In terms of assembly, heterohexadecamer of 8 large and 8 small subunits. As to quaternary structure, (Microbial infection) Binds to tobamovirus movement protein; this interaction seems required for viral systemic movement.

Its subcellular location is the plastid. The protein resides in the chloroplast. It is found in the cell junction. The protein localises to the plasmodesma. In terms of biological role, ruBisCO catalyzes two reactions: the carboxylation of D-ribulose 1,5-bisphosphate, the primary event in carbon dioxide fixation, as well as the oxidative fragmentation of the pentose substrate. Both reactions occur simultaneously and in competition at the same active site. Although the small subunit is not catalytic it is essential for maximal activity. Involved in antiviral defenses. The sequence is that of Ribulose bisphosphate carboxylase small subunit, chloroplastic 3 from Solanum lycopersicum (Tomato).